We begin with the raw amino-acid sequence, 123 residues long: U9-barytoxin-Tl1a (123 aa).

The N-terminal stretch at 1–18 (MNTMITFLVLFVLTAANG) is a signal peptide. The propeptide occupies 19-77 (APEANERKIPEAIHNEDQSLAEMAEELMFFLQQTEFEAPLLQEEEEAEXAEXRNSRERR). Disulfide bonds link Cys78–Cys93, Cys85–Cys98, and Cys92–Cys112.

The protein belongs to the neurotoxin 14 (magi-1) family. 05 (ICK-7) subfamily. ICK-7 sub-subfamily. As to expression, expressed by the venom gland.

It localises to the secreted. Ion channel inhibitor. This is U9-barytoxin-Tl1a from Trittame loki (Brush-footed trapdoor spider).